A 267-amino-acid chain; its full sequence is 4-hydroxy-2-oxo-heptane-1,7-dioate aldolase (267 aa).

The active-site Proton acceptor is His45. Gln147 provides a ligand contact to substrate. Glu149 contributes to the a divalent metal cation binding site. Residues Ala174 and Asp175 each contribute to the substrate site. Residue Asp175 coordinates a divalent metal cation.

The protein belongs to the HpcH/HpaI aldolase family. In terms of assembly, homohexamer; trimer of dimers. The cofactor is a divalent metal cation.

The enzyme catalyses 4-hydroxy-2-oxoheptanedioate = succinate semialdehyde + pyruvate. It functions in the pathway aromatic compound metabolism; 4-hydroxyphenylacetate degradation; pyruvate and succinate semialdehyde from 4-hydroxyphenylacetate: step 7/7. Functionally, catalyzes the reversible retro-aldol cleavage of 4-hydroxy-2-ketoheptane-1,7-dioate (HKHD) to pyruvate and succinic semialdehyde. This chain is 4-hydroxy-2-oxo-heptane-1,7-dioate aldolase, found in Shigella flexneri.